Reading from the N-terminus, the 269-residue chain is Formamidopyrimidine-DNA glycosylase (269 aa).

Residue Pro-2 is the Schiff-base intermediate with DNA of the active site. Catalysis depends on Glu-3, which acts as the Proton donor. The active-site Proton donor; for beta-elimination activity is the Lys-57. Residues His-90, Arg-109, and Lys-150 each coordinate DNA. The FPG-type zinc finger occupies 235–269; sequence QVYGRKGEPCRVCGTPIVATKHAQRATFYCRQCQK. Arg-259 serves as the catalytic Proton donor; for delta-elimination activity.

The protein belongs to the FPG family. In terms of assembly, monomer. Zn(2+) serves as cofactor.

The enzyme catalyses Hydrolysis of DNA containing ring-opened 7-methylguanine residues, releasing 2,6-diamino-4-hydroxy-5-(N-methyl)formamidopyrimidine.. The catalysed reaction is 2'-deoxyribonucleotide-(2'-deoxyribose 5'-phosphate)-2'-deoxyribonucleotide-DNA = a 3'-end 2'-deoxyribonucleotide-(2,3-dehydro-2,3-deoxyribose 5'-phosphate)-DNA + a 5'-end 5'-phospho-2'-deoxyribonucleoside-DNA + H(+). Involved in base excision repair of DNA damaged by oxidation or by mutagenic agents. Acts as a DNA glycosylase that recognizes and removes damaged bases. Has a preference for oxidized purines, such as 7,8-dihydro-8-oxoguanine (8-oxoG). Has AP (apurinic/apyrimidinic) lyase activity and introduces nicks in the DNA strand. Cleaves the DNA backbone by beta-delta elimination to generate a single-strand break at the site of the removed base with both 3'- and 5'-phosphates. In Escherichia coli O7:K1 (strain IAI39 / ExPEC), this protein is Formamidopyrimidine-DNA glycosylase.